Consider the following 106-residue polypeptide: Probable NADP-dependent dehydrogenase in aabA 3'region (106 aa).

NADP(+) is bound at residue L4–I28.

The protein belongs to the short-chain dehydrogenases/reductases (SDR) family.

In Dichelobacter nodosus (Bacteroides nodosus), this protein is Probable NADP-dependent dehydrogenase in aabA 3'region.